We begin with the raw amino-acid sequence, 759 residues long: Arylphorin subunit A4 (759 aa).

The N-terminal stretch at 1 to 16 (MKIAIVLLAIIALVAA) is a signal peptide.

The protein belongs to the hemocyanin family. As to quaternary structure, heterohexamer. As to expression, fat body.

It localises to the secreted. It is found in the extracellular space. In terms of biological role, arylphorin is a larval storage protein (LSP) which may serve as a storage protein used primarily as a source of aromatic amino acids for protein synthesis during metamorphosis. It is a constituent of the sclerotizing system of the cuticle, and serves as a carrier for ecdysteroid hormone. The polypeptide is Arylphorin subunit A4 (Calliphora vicina (Blue blowfly)).